The primary structure comprises 269 residues: Phosphonates import ATP-binding protein PhnC 2 (269 aa).

One can recognise an ABC transporter domain in the interval 2–246; it reads LRIDSLSKRY…VLNEIYGEED (245 aa). An ATP-binding site is contributed by 35–42; it reads GPSGAGKS. The disordered stretch occupies residues 246-269; the sequence is DWNASGPAQDSEENEAVSAGVATH.

Belongs to the ABC transporter superfamily. Phosphonates importer (TC 3.A.1.9.1) family. The complex is composed of two ATP-binding proteins (PhnC), two transmembrane proteins (PhnE) and a solute-binding protein (PhnD).

Its subcellular location is the cell inner membrane. The enzyme catalyses phosphonate(out) + ATP + H2O = phosphonate(in) + ADP + phosphate + H(+). Its function is as follows. Part of the ABC transporter complex PhnCDE involved in phosphonates import. Responsible for energy coupling to the transport system. The polypeptide is Phosphonates import ATP-binding protein PhnC 2 (Synechococcus sp. (strain JA-2-3B'a(2-13)) (Cyanobacteria bacterium Yellowstone B-Prime)).